The primary structure comprises 195 residues: Interferon tau (195 aa).

The N-terminal stretch at 1–23 (MAFMLSLLMALVLVSYGLGGSLG) is a signal peptide. Cystine bridges form between Cys-52–Cys-162 and Cys-87–Cys-109.

The protein belongs to the alpha/beta interferon family. IFN-alphaII subfamily.

The protein resides in the secreted. In terms of biological role, paracrine hormone primarily responsible for maternal recognition of pregnancy. Interacts with endometrial receptors, probably type I interferon receptors, and blocks estrogen receptor expression, preventing the estrogen-induced increase in oxytocin receptor expression in the endometrium. This results in the suppression of the pulsatile endometrial release of the luteolytic hormone prostaglandin F2-alpha, hindering the regression of the corpus luteum (luteolysis) and therefore a return to ovarian cyclicity. This, and a possible direct effect of IFN-tau on prostaglandin synthesis, leads in turn to continued ovarian progesterone secretion, which stimulates the secretion by the endometrium of the nutrients required for the growth of the conceptus. In summary, displays particularly high antiviral and antiproliferative potency concurrently with particular weak cytotoxicity, high antiluteolytic activity and immunomodulatory properties. In contrast with other IFNs, IFN-tau is not virally inducible. In Giraffa camelopardalis (Giraffe), this protein is Interferon tau (IFNT).